The primary structure comprises 111 residues: MADPQLITTAFDLPGYRIERSLGVARGIVVRSRSIVGTFGASIQTLFGGNISLYTSLCERARQDAYERMIEEARQMGGNAIVGMRYDATEIASGVTEVLCYGTAVQAVRAG.

The protein belongs to the UPF0145 family.

The polypeptide is UPF0145 protein BTH_I2656 (Burkholderia thailandensis (strain ATCC 700388 / DSM 13276 / CCUG 48851 / CIP 106301 / E264)).